The primary structure comprises 117 residues: uncharacterized protein (117 aa).

This is an uncharacterized protein from Escherichia coli O6:H1 (strain CFT073 / ATCC 700928 / UPEC).